A 1392-amino-acid chain; its full sequence is ATP-dependent helicase/nuclease subunit A (1392 aa).

The region spanning 3–489 is the UvrD-like helicase ATP-binding domain; sequence NPKWTPAQQA…IDLNQNFRSR (487 aa). 24 to 31 lines the ATP pocket; sequence AAAGSGKT. 3 disordered regions span residues 291 to 319, 555 to 594, and 1051 to 1126; these read RGSK…KARD, KRGA…LEEA, and GPVQ…LDTK. Basic and acidic residues-rich tracts occupy residues 305 to 319 and 567 to 583; these read ENSK…KARD and SPAK…REPE. Positions 556–886 constitute a UvrD-like helicase C-terminal domain; sequence RGAEDAATEV…RFITVHSSKG (331 aa). Positions 584-594 are enriched in acidic residues; that stretch reads SGDDESSLEEA. The segment covering 1088–1113 has biased composition (basic and acidic residues); sequence ASGKTEIPGETKNSEETKTSEDKKNL.

Belongs to the helicase family. AddA subfamily. As to quaternary structure, heterodimer of AddA and AddB/RexB. Mg(2+) serves as cofactor.

The catalysed reaction is Couples ATP hydrolysis with the unwinding of duplex DNA by translocating in the 3'-5' direction.. It carries out the reaction ATP + H2O = ADP + phosphate + H(+). The heterodimer acts as both an ATP-dependent DNA helicase and an ATP-dependent, dual-direction single-stranded exonuclease. Recognizes the chi site generating a DNA molecule suitable for the initiation of homologous recombination. The AddA nuclease domain is required for chi fragment generation; this subunit has the helicase and 3' -&gt; 5' nuclease activities. The protein is ATP-dependent helicase/nuclease subunit A of Desulfitobacterium hafniense (strain DSM 10664 / DCB-2).